Reading from the N-terminus, the 607-residue chain is Autophagy-related protein 16-1 (607 aa).

Residues 13–43 (WKRHIAEELRRRDRLQRQAFEEIILQYTKLL) form an interaction with ATG5 region. A coiled-coil region spans residues 79–230 (DSQLQEMAQL…QKELAEAAKE (152 aa)). A Phosphoserine modification is found at serine 139. The WIPI2-binding stretch occupies residues 207-230 (AENEKDSRRRQARLQKELAEAAKE). The segment at 230–242 (EPLPVEQDDDIEV) is RB1CC1-binding. A phosphoserine mark is found at serine 269 and serine 287. The Caspase cleavage signature appears at 296-299 (DIMD). WD repeat units lie at residues 320–359 (AHDG…CEFK), 364–403 (GSNA…LRHT), 406–445 (GHSG…CIKT), 447–484 (FAGS…VVRE), 486–525 (ELLG…VKQT), 532–573 (KCGS…KVLS), and 575–607 (QHSS…WAQP).

Belongs to the WD repeat ATG16 family. In terms of assembly, homodimer. Homooligomer. Heterooligomer with ATG16L2. Interacts with WIPI1. Interacts with WIPI2. Interacts with RB1CC1; the interaction is required for ULK1 complex-dependent autophagy. Interacts with ATG5. Part of the minor complex composed of 4 sets of ATG12-ATG5 and ATG16L1 (400 kDa); this complex interacts with ATG3 leading to disruption of ATG7 interaction and promotion of ATG8-like proteins lipidation. Part of the major complex composed of 8 sets of ATG12-ATG5 and ATG16L1 (800 kDa). Interacts with RAB33B (GTP- and GDP-bound forms); the complex consists of a tetramer where two RAB33B molecules bind independently one molecule of the ATG16L1 homodimer; the interaction promotes ATG12-ATG5-ATG16L1 complex recruitment to phagophores. Interacts (via WD repeats) with TMEM59; the interaction mediates unconventional autophagic activity of TMEM59. Interacts with TLR2. Interacts (via WD repeats) with MEFV. Interacts (via N-terminal) with CLTC. Interacts with NOD1. Interacts with NOD2. Interacts with TUFM. Interacts with TRIM16. Interacts (via WD repeats) with SPATA33. Interacts with Irgm1. Post-translationally, proteolytic cleavage by activated CASP3 leads to degradation and may regulate autophagy upon cellular stress and apoptotic stimuli. Phosphorylation at Ser-139 promotes association with the ATG12-ATG5 conjugate to form the ATG12-ATG5-ATG16L1 complex. Widely expressed. Expressed in the testis and sperm midpiece (at protein level). In terms of tissue distribution, expressed in liver. As to expression, highly expressed in liver. Expressed in brain.

It localises to the cytoplasm. The protein localises to the preautophagosomal structure membrane. Its subcellular location is the endosome membrane. The protein resides in the lysosome membrane. In terms of biological role, plays an essential role in both canonical and non-canonical autophagy: interacts with ATG12-ATG5 to mediate the lipidation to ATG8 family proteins (MAP1LC3A, MAP1LC3B, MAP1LC3C, GABARAPL1, GABARAPL2 and GABARAP). Acts as a molecular hub, coordinating autophagy pathways via distinct domains that support either canonical or non-canonical signaling. During canonical autophagy, interacts with ATG12-ATG5 to mediate the conjugation of phosphatidylethanolamine (PE) to ATG8 proteins, to produce a membrane-bound activated form of ATG8. Thereby, controls the elongation of the nascent autophagosomal membrane. As part of the ATG8 conjugation system with ATG5 and ATG12, required for recruitment of LRRK2 to stressed lysosomes and induction of LRRK2 kinase activity in response to lysosomal stress. Also involved in non-canonical autophagy, a parallel pathway involving conjugation of ATG8 proteins to single membranes at endolysosomal compartments, probably by catalyzing conjugation of phosphatidylserine (PS) to ATG8. Non-canonical autophagy plays a key role in epithelial cells to limit lethal infection by influenza A (IAV) virus. Regulates mitochondrial antiviral signaling (MAVS)-dependent type I interferon (IFN-I) production. Negatively regulates NOD1- and NOD2-driven inflammatory cytokine response. Instead, promotes an autophagy-dependent antibacterial pathway together with NOD1 or NOD2. Plays a role in regulating morphology and function of Paneth cell. This is Autophagy-related protein 16-1 from Mus musculus (Mouse).